The chain runs to 150 residues: Large ribosomal subunit protein uL16 (150 aa).

The protein belongs to the universal ribosomal protein uL16 family. As to quaternary structure, component of the small ribosomal subunit. Mature ribosomes consist of a small (40S) and a large (60S) subunit. The 40S subunit contains about 33 different proteins and 1 molecule of RNA (18S). The 60S subunit contains about 49 different proteins and 3 molecules of RNA (25S, 5.8S and 5S).

In Nicotiana tabacum (Common tobacco), this protein is Large ribosomal subunit protein uL16 (RPL10).